Consider the following 326-residue polypeptide: MSFLSGLFGPICEIEVALNDSDTRKVSEIKTEEGKVEKHFLFYDGESVAGKVNIVFKQPGKRLEHHGIRIEFVGQIELFNDKSNTHEFVNLVKELALPGELTQSRSYDFEFMQVEKPYESYNGANVRLRYFLKVTIVRRLTDLVKEYDLIVHQLASYPDVNNSIKMEVGIEDCLHIEFEYNKSKYHLKDVIVGKIYFLLVRIKIQHMELQLIKKEITGIGPSTTTETETVAKYEIMDGAPVKGESIPIRLFIAGYDPTPTMRDVNKKFSVRYFLNLVLVDEEDRRYFKQQEIILWRKAPEKIRKRTNFHQRFEPQEPQASAEEPEI.

The protein belongs to the VPS26 family. Component of the heterotrimeric retromer cargo-selective complex (CSC) which is believed to associate with variable sorting nexins to form functionally distinct retromer complex variants.

The protein resides in the cytoplasm. Its subcellular location is the endosome membrane. It localises to the early endosome. In terms of biological role, acts as a component of the retromer cargo-selective complex (CSC). The CSC is believed to be the core functional component of retromer or respective retromer complex variants acting to prevent missorting of selected transmembrane cargo proteins into the lysosomal degradation pathway. Retromer mediates retrograde transport of cargo proteins from endosomes to the trans-Golgi network (TGN). The polypeptide is Vacuolar protein sorting-associated protein 26A-B (vps26a-b) (Xenopus laevis (African clawed frog)).